The sequence spans 495 residues: Glutamyl-tRNA(Gln) amidotransferase subunit A (495 aa).

Catalysis depends on charge relay system residues K78 and S158. S182 acts as the Acyl-ester intermediate in catalysis.

The protein belongs to the amidase family. GatA subfamily. Heterotrimer of A, B and C subunits.

The catalysed reaction is L-glutamyl-tRNA(Gln) + L-glutamine + ATP + H2O = L-glutaminyl-tRNA(Gln) + L-glutamate + ADP + phosphate + H(+). In terms of biological role, allows the formation of correctly charged Gln-tRNA(Gln) through the transamidation of misacylated Glu-tRNA(Gln) in organisms which lack glutaminyl-tRNA synthetase. The reaction takes place in the presence of glutamine and ATP through an activated gamma-phospho-Glu-tRNA(Gln). The sequence is that of Glutamyl-tRNA(Gln) amidotransferase subunit A from Dinoroseobacter shibae (strain DSM 16493 / NCIMB 14021 / DFL 12).